Here is a 214-residue protein sequence, read N- to C-terminus: uncharacterized protein (214 aa).

Transmembrane regions (helical) follow at residues 33–53 (VILFVSLVFILSLVLLYILVV), 104–124 (ILGIFSLFVIAVNSYILSYVL), 132–152 (FIYLVLPHGIIEIPALILSAS), 153–173 (GGVLFNMGLVNFLINIKFGTK), and 186–206 (LLILSIILFIVAGIVEGTITF).

It is found in the cell membrane. This is an uncharacterized protein from Methanocaldococcus jannaschii (strain ATCC 43067 / DSM 2661 / JAL-1 / JCM 10045 / NBRC 100440) (Methanococcus jannaschii).